A 135-amino-acid polypeptide reads, in one-letter code: Small ribosomal subunit protein bS6 (135 aa).

Residue lysine 93 is modified to N6-acetyllysine. Residues glutamate 98–glutamate 135 form a disordered region. Over residues lysine 104–phenylalanine 116 the composition is skewed to basic and acidic residues. The span at threonine 120–glutamate 135 shows a compositional bias: acidic residues.

This sequence belongs to the bacterial ribosomal protein bS6 family. As to quaternary structure, part of the 30S ribosomal subunit. Interacts weakly with uL2 in one of the 3.5 A resolved structures. In terms of processing, 5 different forms of the protein, varying only in the number of C-terminal glutamate residues, were isolated. The sequence shown is form bS6-6, which is the longest. The first two Glu are encoded by the rpsF gene, the other Glu are added post-translationally by the RimK enzyme.

Functionally, binds together with bS18 to 16S ribosomal RNA. The protein is Small ribosomal subunit protein bS6 (rpsF) of Escherichia coli (strain K12).